The chain runs to 168 residues: Cell division inhibitor SulA (168 aa).

The tract at residues 105 to 111 is ftsZ binding; the sequence is ALLTGNY. A lon protease binding region spans residues 161-168; that stretch reads KIHSTLYH.

Belongs to the SulA family. Interacts with FtsZ. Post-translationally, is rapidly cleaved and degraded by the Lon protease once DNA damage is repaired.

In terms of biological role, component of the SOS system and an inhibitor of cell division. Accumulation of SulA causes rapid cessation of cell division and the appearance of long, non-septate filaments. In the presence of GTP, binds a polymerization-competent form of FtsZ in a 1:1 ratio, thus inhibiting FtsZ polymerization and therefore preventing it from participating in the assembly of the Z ring. This mechanism prevents the premature segregation of damaged DNA to daughter cells during cell division. This is Cell division inhibitor SulA from Pectobacterium carotovorum subsp. carotovorum (strain PC1).